A 393-amino-acid polypeptide reads, in one-letter code: Proteasome-activating nucleotidase (393 aa).

The stretch at 15 to 53 (DEVQLVRLLEEKIKSLQIEIENLRKELNYYKAEMEKMLS) forms a coiled coil. Residues 178-183 (GTGKTM) and Tyr317 each bind ATP. A coiled-coil region spans residues 365–393 (MNDLVEAINKINVKRNKMESMKERREKYS). The docks into pockets in the proteasome alpha-ring to cause gate opening stretch occupies residues 391 to 393 (KYS).

It belongs to the AAA ATPase family. Homohexamer. The hexameric complex has a two-ring architecture resembling a top hat that caps the 20S proteasome core at one or both ends. Upon ATP-binding, the C-terminus of PAN interacts with the alpha-rings of the proteasome core by binding to the intersubunit pockets.

It is found in the cytoplasm. Functionally, ATPase which is responsible for recognizing, binding, unfolding and translocation of substrate proteins into the archaeal 20S proteasome core particle. Is essential for opening the gate of the 20S proteasome via an interaction with its C-terminus, thereby allowing substrate entry and access to the site of proteolysis. Thus, the C-termini of the proteasomal ATPase function like a 'key in a lock' to induce gate opening and therefore regulate proteolysis. Unfolding activity requires energy from ATP hydrolysis, whereas ATP binding alone promotes ATPase-20S proteasome association which triggers gate opening, and supports translocation of unfolded substrates. This chain is Proteasome-activating nucleotidase, found in Saccharolobus solfataricus (strain ATCC 35092 / DSM 1617 / JCM 11322 / P2) (Sulfolobus solfataricus).